The following is an 849-amino-acid chain: Mechanosensitive ion channel protein 7 (849 aa).

Residues 1 to 49 (MEFRKPFKSHSSYKQIISTGDQNEKTKKKKKLANLDDGDIAKTQSSGSS) form a disordered region. The span at 9–21 (SHSSYKQIISTGD) shows a compositional bias: polar residues. 6 consecutive transmembrane segments (helical) span residues 231–251 (AITL…VLSL), 274–294 (LVLI…VFFI), 313–333 (TAVQ…FLFD), 344–364 (VLLL…LWLI), 606–626 (MISF…LEIA), and 642–662 (AFMF…LFII).

This sequence belongs to the MscS (TC 1.A.23) family.

The protein resides in the membrane. Mechanosensitive channel that opens in response to stretch forces in the membrane lipid bilayer. This chain is Mechanosensitive ion channel protein 7 (MSL7), found in Arabidopsis thaliana (Mouse-ear cress).